The following is a 663-amino-acid chain: Shugoshin 1 (663 aa).

Coiled coils occupy residues 8 to 29 (KQAF…RIKK) and 110 to 132 (DTAE…NLLE). Disordered stretches follow at residues 207–250 (RNTA…MNKN), 278–401 (EHTV…LNSG), and 417–478 (FRQN…ARKN). 4 stretches are compositionally biased toward basic and acidic residues: residues 231-242 (RLEECNNEDKTE), 280-304 (TVVE…REID), 339-358 (KNKE…KAER), and 366-394 (KPWE…KEKM). Low complexity predominate over residues 427 to 437 (NESSLEISSSE). Basic and acidic residues predominate over residues 443-453 (SLYKPYKDKSK).

The protein belongs to the shugoshin family. In terms of assembly, binds microtubules. Post-translationally, ubiquitinated by the anaphase promoting complex (APC) at the onset of anaphase, conducting to its degradation.

The protein resides in the nucleus. The protein localises to the chromosome. It localises to the centromere. Its subcellular location is the kinetochore. It is found in the nucleus speckle. In terms of biological role, plays a central role in chromosome cohesion during mitosis by preventing premature dissociation of cohesin complex from centromeres after prophase, when most of cohesin complex dissociates from chromosomes arms. May act by preventing phosphorylation of the stag2 subunit of cohesin complex at the centromere, ensuring cohesin persistence at centromere until cohesin cleavage by espl1/separase at anaphase. May regulate kinetochore microtubule stability in mitosis, possibly to sense tension on mitotic chromosomes. The chain is Shugoshin 1 from Xenopus laevis (African clawed frog).